The primary structure comprises 369 residues: RNA pseudouridine synthase 5 (369 aa).

An S4 RNA-binding domain is found at 47–104 (APLLGWIQRIQNGQIQIDGEVVKDPNTLLRSGSKLVYSRLPWKEPDTPYSLEVLYEDD).

This sequence belongs to the pseudouridine synthase RluA family.

The enzyme catalyses a uridine in RNA = a pseudouridine in RNA. The polypeptide is RNA pseudouridine synthase 5 (Arabidopsis thaliana (Mouse-ear cress)).